Consider the following 2130-residue polypeptide: Bromodomain adjacent to zinc finger domain protein 2B (2130 aa).

7 disordered regions span residues 1 to 42 (MESG…TGAA), 82 to 118 (LFAP…SLNG), 151 to 293 (GGRK…QKQP), 491 to 518 (KTTG…PVSN), 543 to 633 (VDSD…SSIG), 756 to 790 (EGRR…GSTE), and 944 to 966 (RKKA…LNKE). Residues 8–33 (TSSSVSSTAAASSPVSSTPSVASAVS) are compositionally biased toward low complexity. The span at 183-206 (ESSSNSDSDSGSSSDTSSEGISSS) shows a compositional bias: low complexity. The segment covering 207–234 (DSDDLEEDEEEEEDQSAEESEDDESDSE) has biased composition (acidic residues). Basic and acidic residues predominate over residues 250–270 (GVKDMKTDGQKAHEKSQEKRT). Polar residues predominate over residues 272 to 283 (QQIPLVSDSQTH). Residues 284–293 (SSFQSQQKQP) are compositionally biased toward low complexity. Residues 492-505 (TTGNRTLVVPSTSP) are compositionally biased toward polar residues. The segment covering 543–554 (VDSDAPSSKESD) has biased composition (basic and acidic residues). Acidic residues predominate over residues 555 to 611 (DSNDDDDDDEDEDEDDEDDDSDDSQSESDSNSESDTDGSEDEDDEDDKDQDESDTDT). Over residues 623-633 (TGSSIKSSSIG) the composition is skewed to low complexity. In terms of domain architecture, MBD spans 687–762 (VTDERELRVP…RAMEGRRGRP (76 aa)). Basic and acidic residues predominate over residues 756–775 (EGRRGRPPNPDRQHSREESR). Residues 797–984 (AKLLRKLQAQ…ELEMAKELKK (188 aa)) are a coiled coil. One can recognise a DDT domain in the interval 1010 to 1075 (GSTFSDCLMI…VTAAVCDPGL (66 aa)). Disordered regions lie at residues 1186-1265 (TGKR…DQTV), 1431-1454 (SLCS…NLFS), 1499-1545 (VTHV…PFAM), and 1773-1795 (HKKH…ERKN). The span at 1220-1244 (SDYDDDDDDDSDDQADEDDEDEEDK) shows a compositional bias: acidic residues. Positions 1245–1254 (EDKKGKKAEV) are enriched in basic and acidic residues. Residues 1514 to 1526 (SHPPSKSPSPVPS) are compositionally biased toward pro residues. The PHD-type zinc-finger motif lies at 1895-1945 (KVYCQICRKGDNEELLLLCDGCDKGCHTYCHRPKITTIPDGDWFCPACIAK). Residues 1957-2019 (QIKGKKSNEQ…KQENFTAIKK (63 aa)) are disordered. Basic and acidic residues predominate over residues 1991 to 2002 (GKTEPKKRKMDE). The segment covering 2004-2014 (VSVSQGKQENF) has biased composition (polar residues). The 105-residue stretch at 2022–2126 (RDDSKDLAIC…KYFEKKWTEI (105 aa)) folds into the Bromo domain.

This sequence belongs to the WAL family.

The protein resides in the nucleus. Its function is as follows. Regulatory subunit of the ATP-dependent BRF-1 and BRF-5 ISWI chromatin remodeling complexes, which form ordered nucleosome arrays on chromatin and facilitate access to DNA during DNA-templated processes such as DNA replication, transcription, and repair. Both complexes regulate the spacing of nucleosomes along the chromatin and have the ability to slide mononucleosomes to the center of a DNA template. The BRF-1 ISWI chromatin remodeling complex has a lower ATP hydrolysis rate than the BRF-5 ISWI chromatin remodeling complex. Chromatin reader protein. Represses the expression of mitochondrial function-related genes, perhaps by transcriptional regulation. The chain is Bromodomain adjacent to zinc finger domain protein 2B (BAZ2B) from Gallus gallus (Chicken).